Reading from the N-terminus, the 157-residue chain is SsrA-binding protein (157 aa).

Residues 133–157 are disordered; that stretch reads LHDKRESEKKRDWGREKGRLLRARG. Basic and acidic residues predominate over residues 135-151; the sequence is DKRESEKKRDWGREKGR.

This sequence belongs to the SmpB family.

Its subcellular location is the cytoplasm. In terms of biological role, required for rescue of stalled ribosomes mediated by trans-translation. Binds to transfer-messenger RNA (tmRNA), required for stable association of tmRNA with ribosomes. tmRNA and SmpB together mimic tRNA shape, replacing the anticodon stem-loop with SmpB. tmRNA is encoded by the ssrA gene; the 2 termini fold to resemble tRNA(Ala) and it encodes a 'tag peptide', a short internal open reading frame. During trans-translation Ala-aminoacylated tmRNA acts like a tRNA, entering the A-site of stalled ribosomes, displacing the stalled mRNA. The ribosome then switches to translate the ORF on the tmRNA; the nascent peptide is terminated with the 'tag peptide' encoded by the tmRNA and targeted for degradation. The ribosome is freed to recommence translation, which seems to be the essential function of trans-translation. The sequence is that of SsrA-binding protein from Bradyrhizobium sp. (strain ORS 278).